The sequence spans 450 residues: MRECISIHVGQAGVQIGNACWELYCLEHGIQPDGQMPSDKTVGGGDDSFNTFFSETGAGKHVPRAVFVDLEPTVVDEVRTGTYRQLFHPEQLITGKEDAANNYARGHYTIGKEIVDLVLDRIRKLADQCTGLQGFLIFHSFGGGTGSGFTSLLMERLSVDYGKKSKLEFAIYPAPQVSTAVVEPYNSILTTHTTLEHSDCAFMVDNEAIYDICRRNLDIERPTYTNLNRLIGQIVSSITASLRFDGALNVDLTEFQTNLVPYPRIHFPLVTYAPVISAEKAYHEQLSVAEITNACFEPANQMVKCDPRHGKYMACCMLYRGDVVPKDVNAAIATIKTKRTIQFVDWCPTGFKVGINYQPPTVVPGGDLAKVQRAVCMLSNTTAIAEAWARLDHKFDLMYAKRAFVHWYVGEGMEEGEFSEAREDLAALEKDYEEVGMDSGDGEGEGAEEY.

Residue glutamine 11 participates in GTP binding. Lysine 40 is modified (N6-acetyllysine). 7 residues coordinate GTP: glutamate 71, serine 140, glycine 144, threonine 145, threonine 179, asparagine 206, and asparagine 228. Position 71 (glutamate 71) interacts with Mg(2+). Glutamate 254 is a catalytic residue.

This sequence belongs to the tubulin family. As to quaternary structure, dimer of alpha and beta chains. A typical microtubule is a hollow water-filled tube with an outer diameter of 25 nm and an inner diameter of 15 nM. Alpha-beta heterodimers associate head-to-tail to form protofilaments running lengthwise along the microtubule wall with the beta-tubulin subunit facing the microtubule plus end conferring a structural polarity. Microtubules usually have 13 protofilaments but different protofilament numbers can be found in some organisms and specialized cells. Interacts with Ote. Mg(2+) serves as cofactor. Undergoes a tyrosination/detyrosination cycle, the cyclic removal and re-addition of a C-terminal tyrosine residue by the enzymes tubulin tyrosine carboxypeptidase (TTCP) and tubulin tyrosine ligase (TTL), respectively. Post-translationally, acetylation of alpha chains at Lys-40 stabilizes microtubules and affects affinity and processivity of microtubule motors. This modification has a role in multiple cellular functions, ranging from cell motility, cell cycle progression or cell differentiation to intracellular trafficking and signaling. During the early stages of oogenesis lky/Alpha-tubulin N-acetyltransferase 2 is the main acetyltransferase responsible for Lys-40 acetylation in germline cells while Atat/alpha-tubulin N-acetyltransferase 1 is the main acetyltransferase responsible for Lys-40 acetylation in somatic cells.

It localises to the cytoplasm. Its subcellular location is the cytoskeleton. The enzyme catalyses GTP + H2O = GDP + phosphate + H(+). Functionally, tubulin is the major constituent of microtubules, a cylinder consisting of laterally associated linear protofilaments composed of alpha- and beta-tubulin heterodimers. Microtubules grow by the addition of GTP-tubulin dimers to the microtubule end, where a stabilizing cap forms. Below the cap, tubulin dimers are in GDP-bound state, owing to GTPase activity of alpha-tubulin. The sequence is that of Tubulin alpha-1 chain (alphaTub84B) from Drosophila melanogaster (Fruit fly).